The sequence spans 81 residues: ATP synthase subunit c (81 aa).

The next 2 membrane-spanning stretches (helical) occupy residues 5–25 (VAAA…IGPG) and 57–77 (LAFM…LLFA).

Belongs to the ATPase C chain family. As to quaternary structure, F-type ATPases have 2 components, F(1) - the catalytic core - and F(0) - the membrane proton channel. F(1) has five subunits: alpha(3), beta(3), gamma(1), delta(1), epsilon(1). F(0) has four main subunits: a(1), b(1), b'(1) and c(10-14). The alpha and beta chains form an alternating ring which encloses part of the gamma chain. F(1) is attached to F(0) by a central stalk formed by the gamma and epsilon chains, while a peripheral stalk is formed by the delta, b and b' chains.

It localises to the cellular thylakoid membrane. In terms of biological role, f(1)F(0) ATP synthase produces ATP from ADP in the presence of a proton or sodium gradient. F-type ATPases consist of two structural domains, F(1) containing the extramembraneous catalytic core and F(0) containing the membrane proton channel, linked together by a central stalk and a peripheral stalk. During catalysis, ATP synthesis in the catalytic domain of F(1) is coupled via a rotary mechanism of the central stalk subunits to proton translocation. Functionally, key component of the F(0) channel; it plays a direct role in translocation across the membrane. A homomeric c-ring of between 10-14 subunits forms the central stalk rotor element with the F(1) delta and epsilon subunits. The chain is ATP synthase subunit c from Microcystis aeruginosa (strain NIES-843 / IAM M-2473).